The chain runs to 602 residues: MSTPLDHIRNFSIVAHIDHGKSTLADRLIQLTGGLDTREMKDQVLDSMDIERERGITIKAQTVRLSYKAKNGEDYVLNLIDTPGHVDFAYEVSRSLAACEGSLLVVDASQGVEAQTLANVYQAIDNNHEIVVVLNKIDLPAAEPERVKQQIEEVIGIDASDAVEISAKTGLGIEDVLEAIVNKLPAPKEGDRNAPLKAMLVDSWYDSYLGVIVLVRVIDGVLKKGQTIRMMGTGAKYPVERTGVFTPKMVQVDDLGPGELGFITASIKEVADTRVGDTITEDRRPTENMLSGFKPAQPVVFCGLFPVDAADFEDLRGAMGKLRLNDASFSFEMETSAALGFGFRCGFLGLLHLEIIQERLEREFNLDLITTAPSVVYRLNMTDGTHKELHNPADMPDVVKIASIEEPWIKATIMTPDDYLGAIMKLCQERRGIQIDLTYVGPRAMITYDLPLNEVVFDFYDRLKSISKGYASFDYNLSDYREGDLVKMSILVNEEPVDALSMLVHRSAAEKRGRALCEKLKELIPQHMFKIPIQAAIGGRIVARETISALRKDVTAKCYGGDVTRKRKLLEKQKEGKKRMRQFGKVEIPQEAFIQALKMGDD.

In terms of domain architecture, tr-type G spans 6–188 (DHIRNFSIVA…AIVNKLPAPK (183 aa)). GTP contacts are provided by residues 18 to 23 (DHGKST) and 135 to 138 (NKID).

It belongs to the TRAFAC class translation factor GTPase superfamily. Classic translation factor GTPase family. LepA subfamily.

The protein localises to the cell inner membrane. It carries out the reaction GTP + H2O = GDP + phosphate + H(+). Required for accurate and efficient protein synthesis under certain stress conditions. May act as a fidelity factor of the translation reaction, by catalyzing a one-codon backward translocation of tRNAs on improperly translocated ribosomes. Back-translocation proceeds from a post-translocation (POST) complex to a pre-translocation (PRE) complex, thus giving elongation factor G a second chance to translocate the tRNAs correctly. Binds to ribosomes in a GTP-dependent manner. The polypeptide is Elongation factor 4 (Brucella suis (strain ATCC 23445 / NCTC 10510)).